Here is a 353-residue protein sequence, read N- to C-terminus: Ferredoxin--NADP reductase (353 aa).

Residues threonine 25, glutamate 44, glutamine 52, tyrosine 57, valine 97, phenylalanine 132, aspartate 298, and serine 339 each contribute to the FAD site.

The protein belongs to the ferredoxin--NADP reductase type 2 family. Homodimer. Requires FAD as cofactor.

It catalyses the reaction 2 reduced [2Fe-2S]-[ferredoxin] + NADP(+) + H(+) = 2 oxidized [2Fe-2S]-[ferredoxin] + NADPH. This is Ferredoxin--NADP reductase from Chlorobium phaeovibrioides (strain DSM 265 / 1930) (Prosthecochloris vibrioformis (strain DSM 265)).